The primary structure comprises 208 residues: NAD(P)H-quinone oxidoreductase subunit I (208 aa).

4Fe-4S ferredoxin-type domains follow at residues 55–84 (GRIHYEFDKCIACEVCVRVCPINLPVVDWV) and 95–124 (RNYSIDFGVCIFCGNCVEYCPTNCLSMTEE). 8 residues coordinate [4Fe-4S] cluster: cysteine 64, cysteine 67, cysteine 70, cysteine 74, cysteine 104, cysteine 107, cysteine 110, and cysteine 114.

This sequence belongs to the complex I 23 kDa subunit family. As to quaternary structure, NDH-1 is composed of at least 11 different subunits. [4Fe-4S] cluster serves as cofactor.

The protein resides in the cellular thylakoid membrane. The enzyme catalyses a plastoquinone + NADH + (n+1) H(+)(in) = a plastoquinol + NAD(+) + n H(+)(out). It carries out the reaction a plastoquinone + NADPH + (n+1) H(+)(in) = a plastoquinol + NADP(+) + n H(+)(out). Functionally, NDH-1 shuttles electrons from an unknown electron donor, via FMN and iron-sulfur (Fe-S) centers, to quinones in the respiratory and/or the photosynthetic chain. The immediate electron acceptor for the enzyme in this species is believed to be plastoquinone. Couples the redox reaction to proton translocation, and thus conserves the redox energy in a proton gradient. This chain is NAD(P)H-quinone oxidoreductase subunit I, found in Prochlorococcus marinus (strain MIT 9215).